Here is a 67-residue protein sequence, read N- to C-terminus: Small ribosomal subunit protein bS21 (67 aa).

Belongs to the bacterial ribosomal protein bS21 family.

This Nitratidesulfovibrio vulgaris (strain DSM 19637 / Miyazaki F) (Desulfovibrio vulgaris) protein is Small ribosomal subunit protein bS21.